A 277-amino-acid chain; its full sequence is Large ribosomal subunit protein uL2 (277 aa).

A disordered region spans residues 218 to 277 (PTVRGSVMNPNDHPHGGGEGKSPIGHPSPLTPWGKPALGYKTRKNKKYSDGMIIKRRGQK).

This sequence belongs to the universal ribosomal protein uL2 family. In terms of assembly, part of the 50S ribosomal subunit. Forms a bridge to the 30S subunit in the 70S ribosome.

One of the primary rRNA binding proteins. Required for association of the 30S and 50S subunits to form the 70S ribosome, for tRNA binding and peptide bond formation. It has been suggested to have peptidyltransferase activity; this is somewhat controversial. Makes several contacts with the 16S rRNA in the 70S ribosome. This is Large ribosomal subunit protein uL2 from Clostridium novyi (strain NT).